We begin with the raw amino-acid sequence, 597 residues long: DNA mismatch repair protein MutL (597 aa).

It belongs to the DNA mismatch repair MutL/HexB family.

Functionally, this protein is involved in the repair of mismatches in DNA. It is required for dam-dependent methyl-directed DNA mismatch repair. May act as a 'molecular matchmaker', a protein that promotes the formation of a stable complex between two or more DNA-binding proteins in an ATP-dependent manner without itself being part of a final effector complex. In Rhodopseudomonas palustris (strain BisB5), this protein is DNA mismatch repair protein MutL.